We begin with the raw amino-acid sequence, 200 residues long: Lipopolysaccharide core heptose(II)-phosphate phosphatase (200 aa).

A signal peptide spans 1–25 (MLAFCRSSLKSKKYFIILLALAAIA).

Belongs to the phosphoglycerate mutase family. Ais subfamily.

Its subcellular location is the periplasm. It functions in the pathway bacterial outer membrane biogenesis; lipopolysaccharide metabolism. Functionally, catalyzes the dephosphorylation of heptose(II) of the outer membrane lipopolysaccharide core. This Escherichia coli O9:H4 (strain HS) protein is Lipopolysaccharide core heptose(II)-phosphate phosphatase.